The chain runs to 531 residues: Peptide chain release factor 3 (531 aa).

In terms of domain architecture, tr-type G spans 13–282; sequence AKRRTFAIIS…TLIKYSPPPK (270 aa). Residues 22 to 29, 90 to 94, and 144 to 147 each bind GTP; these read SHPDAGKT, DTPGH, and NKLD.

Belongs to the TRAFAC class translation factor GTPase superfamily. Classic translation factor GTPase family. PrfC subfamily.

The protein resides in the cytoplasm. Increases the formation of ribosomal termination complexes and stimulates activities of RF-1 and RF-2. It binds guanine nucleotides and has strong preference for UGA stop codons. It may interact directly with the ribosome. The stimulation of RF-1 and RF-2 is significantly reduced by GTP and GDP, but not by GMP. The protein is Peptide chain release factor 3 of Psychrobacter arcticus (strain DSM 17307 / VKM B-2377 / 273-4).